A 593-amino-acid chain; its full sequence is MTADNALYIPPYKADDQDVVVELNNRFGAEAFTAQPTRTGMPVLWVERARLFEILTFLRNVPKPYSMLYDLHGVDERLRTNRRGLPGADFTVFYHLLSIERNSDVMIKVALSESDLSVPTITSIWPNANWYEREVWDMFGIDFPGHPHLSRIMMPPTWEGHPLRKDFPARATEFDPYSLTLAKQQLEEEAARFRPEDWGMKRSGANEDYMFLNLGPNHPSAHGAFRIILQLDGEEIVDCVPDIGYHHRGAEKMAERQSWHSFIPYTDRIDYLGGVMNNLPYVLSVEKLAGIKVPEKVDVIRIMMAEFFRITSHLLFLGTYIQDVGAMTPVFFTFTDRQKAYTVIEAITGFRLHPAWYRIGGVAHDLPRGWEKLVKDFVDWLPKRLDEYTKAALQNSILKGRTIGVAAYNTKEALEWGVTGAGLRSTGCDFDLRKARPYSGYENFEFEVPLAANGDAYDRCMVRVEEMRQSIKIIDQCMRNMPEGPYKADHPLTTPPPKERTLQHIETLITHFLQVSWGPVMPANESFQMIEATKGINSYYLTSDGGTMSYRTRIRTPSYPHLQQIPSVIKGSMVADLIAYLGSIDFVMADVDR.

Residues 1–184 form an NADH dehydrogenase I subunit C region; that stretch reads MTADNALYIP…DPYSLTLAKQ (184 aa). Residues 208-593 form an NADH dehydrogenase I subunit D region; sequence DYMFLNLGPN…IDFVMADVDR (386 aa).

In the N-terminal section; belongs to the complex I 30 kDa subunit family. It in the C-terminal section; belongs to the complex I 49 kDa subunit family. As to quaternary structure, NDH-1 is composed of 13 different subunits. Subunits NuoB, CD, E, F, and G constitute the peripheral sector of the complex.

It is found in the cell inner membrane. The enzyme catalyses a quinone + NADH + 5 H(+)(in) = a quinol + NAD(+) + 4 H(+)(out). Its function is as follows. NDH-1 shuttles electrons from NADH, via FMN and iron-sulfur (Fe-S) centers, to quinones in the respiratory chain. The immediate electron acceptor for the enzyme in this species is believed to be ubiquinone. Couples the redox reaction to proton translocation (for every two electrons transferred, four hydrogen ions are translocated across the cytoplasmic membrane), and thus conserves the redox energy in a proton gradient. The chain is NADH-quinone oxidoreductase subunit C/D from Pseudomonas syringae pv. syringae (strain B728a).